Consider the following 270-residue polypeptide: UPF0354 protein BT9727_4425 (270 aa).

Belongs to the UPF0354 family.

This chain is UPF0354 protein BT9727_4425, found in Bacillus thuringiensis subsp. konkukian (strain 97-27).